The chain runs to 177 residues: Peptidoglycan-associated lipoprotein (177 aa).

An N-terminal signal peptide occupies residues 1–32 (MSRTNISALSPMQKLARNPAVIAMTLALALAG). Cys33 is lipidated: N-palmitoyl cysteine. A lipid anchor (S-diacylglycerol cysteine) is attached at Cys33. An OmpA-like domain is found at 59 to 176 (QQDFTVNVGD…RAVTVLGGAG (118 aa)).

This sequence belongs to the Pal lipoprotein family. As to quaternary structure, the Tol-Pal system is composed of five core proteins: the inner membrane proteins TolA, TolQ and TolR, the periplasmic protein TolB and the outer membrane protein Pal. They form a network linking the inner and outer membranes and the peptidoglycan layer.

The protein localises to the cell outer membrane. Functionally, part of the Tol-Pal system, which plays a role in outer membrane invagination during cell division and is important for maintaining outer membrane integrity. This chain is Peptidoglycan-associated lipoprotein, found in Agrobacterium fabrum (strain C58 / ATCC 33970) (Agrobacterium tumefaciens (strain C58)).